Consider the following 360-residue polypeptide: Peptide chain release factor 1 (360 aa).

The residue at position 235 (Q235) is an N5-methylglutamine. The interval 285 to 313 is disordered; the sequence is KRQQAEASTRRNLLGSGDRSDRNRTYNFP.

This sequence belongs to the prokaryotic/mitochondrial release factor family. Methylated by PrmC. Methylation increases the termination efficiency of RF1.

The protein localises to the cytoplasm. Functionally, peptide chain release factor 1 directs the termination of translation in response to the peptide chain termination codons UAG and UAA. The polypeptide is Peptide chain release factor 1 (Shigella boydii serotype 18 (strain CDC 3083-94 / BS512)).